The chain runs to 512 residues: MTEPTQPNAAPQNAVELDDNQIIAERREKLRALREQGVAYPNDFRPTHHAADLQTEYADADKDALETKALHVALAGRMMLKRVMGKASFATVRDGSGQIQFFITPADVGEATYEAFKKWDLGDIVAAKGVLFRTNKGELSVRCTELRLLSKALRPLPDKFHGLADQEMRYRQRYVDLIVTDEARKTFVARTKAVSSIRKFMAEADFMEVETPMLHPIPGGAAAKPFVTHHNALDMQMFLRIAPELYLKRLVVGGFERVFEINRNFRNEGVSPRHNPEFTMMEFYAAYTDYKWLMDFTEQLIRQAAVDALGNAAITYQGRELDLSKPFHRLTITQAIQKYAPQYSDAQLADGAFLRTELKKFGVDATQPAFLNAGIGALQLALFEETAESQLWEPTFIIDYPIEVSPLARASDSVDGITERFELFITGREIANGFSELNDPEDQAARFKKQVDQKDAGDEEAMYYDADYIRALEYGMPPAGGCGIGIDRLVMLLTDSPSIRDVILFPHLRRED.

2 residues coordinate Mg(2+): glutamate 422 and glutamate 429.

Belongs to the class-II aminoacyl-tRNA synthetase family. In terms of assembly, homodimer. The cofactor is Mg(2+).

The protein resides in the cytoplasm. The catalysed reaction is tRNA(Lys) + L-lysine + ATP = L-lysyl-tRNA(Lys) + AMP + diphosphate. The sequence is that of Lysine--tRNA ligase from Paraburkholderia phymatum (strain DSM 17167 / CIP 108236 / LMG 21445 / STM815) (Burkholderia phymatum).